Reading from the N-terminus, the 346-residue chain is Biotin synthase (346 aa).

Positions 41–265 (NEVQISTLLS…MMPHSYVRLS (225 aa)) constitute a Radical SAM core domain. Positions 56, 60, and 63 each coordinate [4Fe-4S] cluster. Residues C100, C131, C191, and R263 each coordinate [2Fe-2S] cluster.

This sequence belongs to the radical SAM superfamily. Biotin synthase family. Homodimer. The cofactor is [4Fe-4S] cluster. It depends on [2Fe-2S] cluster as a cofactor.

The enzyme catalyses (4R,5S)-dethiobiotin + (sulfur carrier)-SH + 2 reduced [2Fe-2S]-[ferredoxin] + 2 S-adenosyl-L-methionine = (sulfur carrier)-H + biotin + 2 5'-deoxyadenosine + 2 L-methionine + 2 oxidized [2Fe-2S]-[ferredoxin]. It functions in the pathway cofactor biosynthesis; biotin biosynthesis; biotin from 7,8-diaminononanoate: step 2/2. Functionally, catalyzes the conversion of dethiobiotin (DTB) to biotin by the insertion of a sulfur atom into dethiobiotin via a radical-based mechanism. This chain is Biotin synthase, found in Pseudoalteromonas translucida (strain TAC 125).